A 179-amino-acid chain; its full sequence is Large ribosomal subunit protein uL5 (179 aa).

It belongs to the universal ribosomal protein uL5 family. In terms of assembly, part of the 50S ribosomal subunit; part of the 5S rRNA/L5/L18/L25 subcomplex. Contacts the 5S rRNA and the P site tRNA. Forms a bridge to the 30S subunit in the 70S ribosome.

This is one of the proteins that bind and probably mediate the attachment of the 5S RNA into the large ribosomal subunit, where it forms part of the central protuberance. In the 70S ribosome it contacts protein S13 of the 30S subunit (bridge B1b), connecting the 2 subunits; this bridge is implicated in subunit movement. Contacts the P site tRNA; the 5S rRNA and some of its associated proteins might help stabilize positioning of ribosome-bound tRNAs. This chain is Large ribosomal subunit protein uL5, found in Saccharophagus degradans (strain 2-40 / ATCC 43961 / DSM 17024).